The primary structure comprises 329 residues: Endonuclease 8-like 2 (329 aa).

Catalysis depends on Pro-2, which acts as the Schiff-base intermediate with DNA. Glu-3 serves as the catalytic Proton donor. Lys-50 (proton donor; for beta-elimination activity) is an active-site residue. An N6-acetyllysine modification is found at Lys-50. Ser-68 is subject to Phosphoserine. The interval 68-116 (SLLSEPLREGEQKDKARHHQEASDPSSWSPGGDSAVPSGDDGLQCLGGD) is disordered. A compositionally biased stretch (basic and acidic residues) spans 73–89 (PLREGEQKDKARHHQEA). Positions 90–102 (SDPSSWSPGGDSA) are enriched in low complexity. N6-acetyllysine is present on Lys-149. Asn-227 lines the DNA pocket. The segment at 280–316 (QIYQKEQCPAGHQVVRESLGPPGGFQRLTWWCPQCQP) adopts an FPG-type zinc-finger fold. Arg-306 acts as the Proton donor; for delta-elimination activity in catalysis.

It belongs to the FPG family. As to quaternary structure, binds EP300.

It localises to the nucleus. It catalyses the reaction 2'-deoxyribonucleotide-(2'-deoxyribose 5'-phosphate)-2'-deoxyribonucleotide-DNA = a 3'-end 2'-deoxyribonucleotide-(2,3-dehydro-2,3-deoxyribose 5'-phosphate)-DNA + a 5'-end 5'-phospho-2'-deoxyribonucleoside-DNA + H(+). With respect to regulation, acetylation of Lys-50 leads to loss of DNA nicking activity. Involved in base excision repair of DNA damaged by oxidation or by mutagenic agents. Has DNA glycosylase activity towards 5-hydroxyuracil and other oxidized derivatives of cytosine with a preference for mismatched double-stranded DNA (DNA bubbles). Has low or no DNA glycosylase activity towards thymine glycol, 2-hydroxyadenine, hypoxanthine and 8-oxoguanine. Has AP (apurinic/apyrimidinic) lyase activity and introduces nicks in the DNA strand. Cleaves the DNA backbone by beta-delta elimination to generate a single-strand break at the site of the removed base with both 3'- and 5'-phosphates. This is Endonuclease 8-like 2 (NEIL2) from Bos taurus (Bovine).